A 472-amino-acid polypeptide reads, in one-letter code: Coronin-6 (472 aa).

6 WD repeats span residues 23 to 64, 72 to 111, 122 to 161, 165 to 204, 210 to 251, and 256 to 296; these read QAYE…VLPL, KNYP…VWQI, EPII…IWNV, EVLL…IIDP, VAEQ…LWDP, and EPVA…YFEI. The tract at residues 407–433 is disordered; that stretch reads KRNILDVRPPSGPRRSQSASDAPLSQQ. Positions 420–433 are enriched in polar residues; that stretch reads RRSQSASDAPLSQQ. Residues 430 to 464 are a coiled coil; the sequence is LSQQHTLETLLEEIKALRERVQAQEQRITALENML.

This is Coronin-6 (CORO6) from Homo sapiens (Human).